The sequence spans 229 residues: Ras-like protein rasV (229 aa).

40–47 (GDGGVGKT) provides a ligand contact to GTP. The Effector region signature appears at 62–70 (YDPTIEDSY). GTP-binding positions include 87–91 (DTAGQ) and 146–149 (NKSD). C226 carries the post-translational modification Cysteine methyl ester. C226 is lipidated: S-geranylgeranyl cysteine. Positions 227-229 (KVM) are cleaved as a propeptide — removed in mature form.

It belongs to the small GTPase superfamily. Ras family.

The protein localises to the cell membrane. The catalysed reaction is GTP + H2O = GDP + phosphate + H(+). Its function is as follows. Ras proteins bind GDP/GTP and possess intrinsic GTPase activity. In Dictyostelium discoideum (Social amoeba), this protein is Ras-like protein rasV (rasV).